Here is a 996-residue protein sequence, read N- to C-terminus: Sarcoplasmic/endoplasmic reticulum calcium ATPase 1 (996 aa).

Topologically, residues 1-48 (MENAHTKSPAECLSYFGVNEHTGLSPDQFKKNLDKFGYNELPAEEGKS) are cytoplasmic. Residues 49-69 (IWDLIVEQFEDLLVRILLLAA) form a helical membrane-spanning segment. The Lumenal portion of the chain corresponds to 70 to 89 (CISFVLAWFEEGEETITAFV). A helical membrane pass occupies residues 90–110 (EPFVILLILIANAIVGVWQER). Topologically, residues 111 to 253 (NAEDAIEALK…QEKTPLQAKL (143 aa)) are cytoplasmic. Residues 254 to 273 (DEFGEQLSKVISLICVAVWA) traverse the membrane as a helical segment. The Lumenal portion of the chain corresponds to 274 to 295 (INIGHFNDPVHGGSWIRGAVYY). A helical membrane pass occupies residues 296–313 (FKIAVALAVAAIPEGLPA). Residues V304, A305, I307, and E309 each contribute to the Ca(2+) site. Residues 314–754 (VITTCLALGT…EEGRAIYNNM (441 aa)) are Cytoplasmic-facing. Catalysis depends on D351, which acts as the 4-aspartylphosphate intermediate. Mg(2+)-binding residues include D351 and T353. Residues T353, E442, R489, K512, R557, T622, G623, D624, R675, and K681 each contribute to the ATP site. Residue D700 coordinates Mg(2+). N703 is a binding site for ATP. A helical membrane pass occupies residues 755–774 (KQFIRYLISSNVGEVVCIFL). N765 and E768 together coordinate Ca(2+). Topologically, residues 775-784 (TAALGLPEAL) are lumenal. The chain crosses the membrane as a helical span at residues 785–805 (IPVQLLWVNLVTDGLPATALG). Residues 785 to 805 (IPVQLLWVNLVTDGLPATALG) form an interaction with PLN region. Residues N793, T796, and D797 each contribute to the Ca(2+) site. Topologically, residues 806–825 (FNPPDLDIMGKPPRSPKEPL) are cytoplasmic. A helical transmembrane segment spans residues 826–848 (ISGWLFFRYMAIGGYVGAATVGG). Residues 849–894 (AAWWFLYDSTGPAVTYYQLSHFMQCHNHNEDFTGVDCDIFEASPPM) are Lumenal-facing. An intrachain disulfide couples C873 to C885. A helical membrane pass occupies residues 895-914 (TMALSVLVTIEMCNALNSLS). E905 contacts Ca(2+). The Cytoplasmic segment spans residues 915-927 (ENQSLIRMPPWSN). Residues 928-946 (LWLMAAMTLSMSLHFMIIY) form a helical membrane-spanning segment. The interaction with PLN stretch occupies residues 929–940 (WLMAAMTLSMSL). The Lumenal portion of the chain corresponds to 947 to 961 (VDPLPMIFKLTHLTF). The chain crosses the membrane as a helical span at residues 962–982 (DQWLMVFKLSFPVILIDEVLK). The Cytoplasmic segment spans residues 983 to 996 (FFARNYIETGKEVK).

Belongs to the cation transport ATPase (P-type) (TC 3.A.3) family. Type IIA subfamily. As to quaternary structure, interacts with sarcolipin (SLN). Interacts with phospholamban (PLN). Interacts with myoregulin (MRLN). Interacts with DWORF. Mg(2+) serves as cofactor.

The protein resides in the endoplasmic reticulum membrane. It is found in the sarcoplasmic reticulum membrane. The enzyme catalyses Ca(2+)(in) + ATP + H2O = Ca(2+)(out) + ADP + phosphate + H(+). With respect to regulation, inhibited by sarcolipin (SLN) and myoregulin (MRLN). Also shown to be inhibited by phospholamban (PLN) in vitro. Enhanced by DWORF; DWORF increases activity by displacing sarcolipin (SLN), phospholamban (PLN) and myoregulin (MRLN). Its function is as follows. Key regulator of striated muscle performance by acting as the major Ca(2+) ATPase responsible for the reuptake of cytosolic Ca(2+) into the sarcoplasmic reticulum. Catalyzes the hydrolysis of ATP coupled with the translocation of calcium from the cytosol to the sarcoplasmic reticulum lumen. Contributes to calcium sequestration involved in muscular excitation/contraction. The polypeptide is Sarcoplasmic/endoplasmic reticulum calcium ATPase 1 (atp2a1) (Makaira nigricans (Atlantic blue marlin)).